A 3828-amino-acid polypeptide reads, in one-letter code: Histone-lysine N-methyltransferase trithorax (3828 aa).

3 disordered regions span residues 25-179, 356-390, and 512-589; these read EDEA…AAAA, AVKS…ATKQ, and FRKQ…RSTR. The span at 29 to 57 shows a compositional bias: low complexity; it reads ASAAAAAAAATAATTEQHQQSEQSAGSSA. Polar residues predominate over residues 77–89; the sequence is AATSGNRGASSGA. Residues 101 to 114 show a composition bias toward low complexity; sequence GNGSSTGSKTTNGG. Over residues 152 to 165 the composition is skewed to acidic residues; that stretch reads DGTEDTNNDDDDDS. The segment covering 359-387 has biased composition (low complexity); sequence SSGSSPNPNHNPNAVAGSTSAAAPGAPTA. Positions 513 to 523 are enriched in basic and acidic residues; it reads RKQEPQHKTPE. The span at 524-553 shows a compositional bias: acidic residues; it reads DNDDDGSASSDAIEDDEDIDDDDAEENEEA. Positions 554–581 are enriched in basic and acidic residues; sequence ASEKSAETTASVDEKEADDRQLVMDKHF. Positions 725–839 form a DNA-binding region, nuclear receptor; sequence ASTCAVCSAP…AGHRSRLSAI (115 aa). 3 disordered regions span residues 933-1036, 1075-1094, and 1131-1170; these read ESKE…SAVP, ELAA…TTSP, and AQPA…TTRN. A compositionally biased stretch (basic and acidic residues) spans 960–974; that stretch reads AKQDKEKARELEAEK. 2 stretches are compositionally biased toward low complexity: residues 998 to 1022 and 1078 to 1094; these read ASTT…TNSS and AAEA…TTSP. Over residues 1140–1170 the composition is skewed to polar residues; that stretch reads ESRSSKSNTQTEAKKTPATSGSSKGKVTTRN. 3 PHD-type zinc fingers span residues 1251-1334, 1335-1380, and 1408-1469; these read RALC…CTVC, YTCN…CLKC, and GNFC…CARR. Residues 1483 to 1644 enclose the Bromo domain; the sequence is AVMEEFKSSL…SEQFPWFQNE (162 aa). The C2HC pre-PHD-type zinc-finger motif lies at 1708–1748; that stretch reads TRVCLFCRKSGEGLSGEEARLLYCGHDCWVHINCAMWSAEV. The PHD-type 4 zinc-finger motif lies at 1769 to 1816; that stretch reads IKCTVCGNRGATVGCNVKSCGEHYHYPCARTIDCAFLTDKSMYCPAHA. The FYR N-terminal domain maps to 1856-1913; the sequence is KVQFHIGSVAVRQLGSIVPRFSDSFEAIVPINFLCSRLYWSSKEPWKIVEYTVRTTIQ. 8 disordered regions span residues 2252–2272, 2464–2510, 2826–2848, 2897–2973, 2988–3031, 3117–3178, 3314–3338, and 3457–3487; these read CEPM…AQLS, AHQK…QQQQ, RNTN…PQQS, RQQQ…SPAA, APAP…QLSM, ASAN…VPAG, NGSG…DDDD, and KLDV…PMRD. 3 stretches are compositionally biased toward low complexity: residues 2253–2268, 2483–2510, and 2836–2848; these read EPMS…ATGT, QGQQ…QQQQ, and SVLS…PQQS. Residues 2897-2917 are compositionally biased toward polar residues; sequence RQQQANELKNKQAAGQQTGST. Composition is skewed to low complexity over residues 2956–2973, 2988–2997, 3005–3031, and 3117–3132; these read ATSA…SPAA, APAPQPQQQE, LHQQ…QLSM, and ASAN…QQNS. The segment covering 3148–3164 has biased composition (polar residues); it reads QQRQEPTPLSNDVVVQS. The segment covering 3328-3338 has biased composition (acidic residues); sequence DDAEEDEDDDD. Positions 3493–3577 constitute an FYR C-terminal domain; it reads GPHLLYEIQS…EKCVKYTPKY (85 aa). The region spanning 3690-3806 is the SET domain; sequence DYVGVFRSHI…QGEELTYDYK (117 aa). Residues His3700, Arg3702, Tyr3744, and 3767 to 3768 contribute to the S-adenosyl-L-methionine site; that span reads NH. Cys3770, Cys3816, Cys3818, and Cys3823 together coordinate Zn(2+). The Post-SET domain occupies 3812–3828; sequence EKIPCSCGSKRCRKYLN.

This sequence belongs to the class V-like SAM-binding methyltransferase superfamily. Histone-lysine methyltransferase family. TRX/MLL subfamily. Interacts with ash1 via its SET domain.

The protein localises to the nucleus. It catalyses the reaction L-lysyl(9)-[histone H3] + 3 S-adenosyl-L-methionine = N(6),N(6),N(6)-trimethyl-L-lysyl(9)-[histone H3] + 3 S-adenosyl-L-homocysteine + 3 H(+). Histone methyltransferase that methylates 'Lys-4' of histone H3 (H3K4me). H3K4me represents a specific tag for epigenetic transcriptional activation. Functions in segment determination through interaction with genes of bithorax (BX-C) and antennapedia (ANT-C) complexes. Acts as an activator of BX-C. Involved in the very early regulation of homeotic genes expressed only in the posterior region of the embryo. The chain is Histone-lysine N-methyltransferase trithorax (trx) from Drosophila virilis (Fruit fly).